A 431-amino-acid polypeptide reads, in one-letter code: Isocitrate lyase (431 aa).

Residues 1 to 21 (MSNVGTPRTAQEIQQDWDTNP) form a disordered region. Position 93 to 95 (93 to 95 (SGW)) interacts with substrate. D155 lines the Mg(2+) pocket. The active-site Proton acceptor is the C193. Substrate contacts are provided by residues 194–195 (GH), R230, 315–319 (NCSPS), and T349.

The protein belongs to the isocitrate lyase/PEP mutase superfamily. Isocitrate lyase family. As to quaternary structure, homotetramer. Mg(2+) is required as a cofactor.

It catalyses the reaction D-threo-isocitrate = glyoxylate + succinate. It functions in the pathway carbohydrate metabolism; glyoxylate cycle; (S)-malate from isocitrate: step 1/2. Involved in the metabolic adaptation in response to environmental changes. Catalyzes the reversible formation of succinate and glyoxylate from isocitrate, a key step of the glyoxylate cycle, which operates as an anaplerotic route for replenishing the tricarboxylic acid cycle during growth on fatty acid substrates. This Corynebacterium efficiens (strain DSM 44549 / YS-314 / AJ 12310 / JCM 11189 / NBRC 100395) protein is Isocitrate lyase (aceA).